The primary structure comprises 412 residues: Zinc finger protein 821 (412 aa).

Positions R26–K83 are disordered. A compositionally biased stretch (acidic residues) spans S58–Q67. C2H2-type zinc fingers lie at residues G116–H140 and Y150–H172. The stretch at K257 to Q366 forms a coiled coil. Residues R278–R319 are disordered.

This sequence belongs to the krueppel C2H2-type zinc-finger protein family.

The protein localises to the nucleus. Its function is as follows. May be involved in transcriptional regulation. In Bos taurus (Bovine), this protein is Zinc finger protein 821 (ZNF821).